The chain runs to 423 residues: Methylenetetrahydrofolate--tRNA-(uracil-5-)-methyltransferase TrmFO 2 (423 aa).

FAD is bound at residue 8-13 (GAGLSG).

It belongs to the MnmG family. TrmFO subfamily. FAD is required as a cofactor.

It localises to the cytoplasm. The catalysed reaction is uridine(54) in tRNA + (6R)-5,10-methylene-5,6,7,8-tetrahydrofolate + NADH + H(+) = 5-methyluridine(54) in tRNA + (6S)-5,6,7,8-tetrahydrofolate + NAD(+). It catalyses the reaction uridine(54) in tRNA + (6R)-5,10-methylene-5,6,7,8-tetrahydrofolate + NADPH + H(+) = 5-methyluridine(54) in tRNA + (6S)-5,6,7,8-tetrahydrofolate + NADP(+). In terms of biological role, catalyzes the folate-dependent formation of 5-methyl-uridine at position 54 (M-5-U54) in all tRNAs. The sequence is that of Methylenetetrahydrofolate--tRNA-(uracil-5-)-methyltransferase TrmFO 2 from Mycoplasma capricolum subsp. capricolum (strain California kid / ATCC 27343 / NCTC 10154).